A 186-amino-acid chain; its full sequence is Calcium-binding protein NCSA (186 aa).

EF-hand domains lie at Ser-40–Gly-58, Leu-66–Gly-93, Thr-94–Leu-129, and Asp-142–Ile-177. The Ca(2+) site is built by Asp-107, Asp-109, Asn-111, Tyr-113, Glu-118, Asp-155, Asp-157, Asp-159, Tyr-161, and Glu-166.

Belongs to the recoverin family.

Functionally, may prevent cells from entering development prematurely in the presence of environmental nutrients. This is Calcium-binding protein NCSA (ncsA) from Dictyostelium discoideum (Social amoeba).